We begin with the raw amino-acid sequence, 264 residues long: Thymidylate synthase (264 aa).

Residue arginine 21 participates in dUMP binding. Histidine 51 provides a ligand contact to (6R)-5,10-methylene-5,6,7,8-tetrahydrofolate. Residue 126–127 (RR) coordinates dUMP. Catalysis depends on cysteine 146, which acts as the Nucleophile. DUMP is bound by residues 166–169 (RSAD), asparagine 177, and 207–209 (HLY). Aspartate 169 serves as a coordination point for (6R)-5,10-methylene-5,6,7,8-tetrahydrofolate. Alanine 263 contributes to the (6R)-5,10-methylene-5,6,7,8-tetrahydrofolate binding site.

Belongs to the thymidylate synthase family. Bacterial-type ThyA subfamily. As to quaternary structure, homodimer.

It is found in the cytoplasm. The enzyme catalyses dUMP + (6R)-5,10-methylene-5,6,7,8-tetrahydrofolate = 7,8-dihydrofolate + dTMP. The protein operates within pyrimidine metabolism; dTTP biosynthesis. Its function is as follows. Catalyzes the reductive methylation of 2'-deoxyuridine-5'-monophosphate (dUMP) to 2'-deoxythymidine-5'-monophosphate (dTMP) while utilizing 5,10-methylenetetrahydrofolate (mTHF) as the methyl donor and reductant in the reaction, yielding dihydrofolate (DHF) as a by-product. This enzymatic reaction provides an intracellular de novo source of dTMP, an essential precursor for DNA biosynthesis. The sequence is that of Thymidylate synthase from Legionella pneumophila (strain Corby).